We begin with the raw amino-acid sequence, 606 residues long: Vitamin B12 transporter BtuB (606 aa).

Positions 1–21 (MKKTLLAVALAPLCLPSQVFA) are cleaved as a signal peptide. The short motif at 28–35 (DVMVVTAN) is the TonB box element. The region spanning 40–152 (PIKNVIAPIS…IGGVLNIITA (113 aa)) is the TBDR plug domain. Residues 157–606 (ESVAEVTAGG…SYYATATYKF (450 aa)) form the TBDR beta-barrel domain. The TonB C-terminal box motif lies at 589–606 (ETYNVQERSYYATATYKF).

This sequence belongs to the TonB-dependent receptor family. BtuB (TC 1.B.14.3.1) subfamily.

The protein resides in the cell outer membrane. Involved in the active translocation of vitamin B12 (cyanocobalamin) across the outer membrane to the periplasmic space. It derives its energy for transport by interacting with the trans-periplasmic membrane protein TonB. In Photobacterium profundum (strain SS9), this protein is Vitamin B12 transporter BtuB.